Reading from the N-terminus, the 627-residue chain is (-)-beta-pinene synthase 2, chloroplastic (627 aa).

The N-terminal 51 residues, 1 to 51 (MDLISVLPSASKSCVCLHKPLSSSTHKLKPFCRKIRILGMPRPRKSVLMVS), are a transit peptide targeting the chloroplast. The Mg(2+) site is built by D378, D382, and D530. The DDXXD motif motif lies at 378-382 (DDMYD).

Belongs to the terpene synthase family. Tpsd subfamily. Mg(2+) is required as a cofactor. Mn(2+) serves as cofactor.

It is found in the plastid. The protein localises to the chloroplast. It catalyses the reaction (2E)-geranyl diphosphate = (1S,5S)-beta-pinene + diphosphate. It carries out the reaction (2E)-geranyl diphosphate = (1S,5S)-alpha-pinene + diphosphate. It functions in the pathway terpene metabolism; oleoresin biosynthesis. The protein operates within secondary metabolite biosynthesis; terpenoid biosynthesis. Functionally, monoterpene synthase (TPS) involved in the biosynthesis of monoterpene natural products included in conifer oleoresin secretions and volatile emissions; these compounds contribute to biotic and abiotic stress defense against herbivores and pathogens. Catalyzes the conversion of (2E)-geranyl diphosphate (GPP) to (-)-beta-pinene and, to a lower extent, to (-)-alpha-pinene. The protein is (-)-beta-pinene synthase 2, chloroplastic of Pinus banksiana (Jack pine).